The sequence spans 295 residues: Phosphatidylserine decarboxylase proenzyme (295 aa).

Residues Asp113, His169, and Ser256 each act as charge relay system; for autoendoproteolytic cleavage activity in the active site. Residue Ser256 is the Schiff-base intermediate with substrate; via pyruvic acid; for decarboxylase activity of the active site. Ser256 carries the post-translational modification Pyruvic acid (Ser); by autocatalysis.

Belongs to the phosphatidylserine decarboxylase family. PSD-B subfamily. Prokaryotic type II sub-subfamily. Heterodimer of a large membrane-associated beta subunit and a small pyruvoyl-containing alpha subunit. Requires pyruvate as cofactor. Post-translationally, is synthesized initially as an inactive proenzyme. Formation of the active enzyme involves a self-maturation process in which the active site pyruvoyl group is generated from an internal serine residue via an autocatalytic post-translational modification. Two non-identical subunits are generated from the proenzyme in this reaction, and the pyruvate is formed at the N-terminus of the alpha chain, which is derived from the carboxyl end of the proenzyme. The autoendoproteolytic cleavage occurs by a canonical serine protease mechanism, in which the side chain hydroxyl group of the serine supplies its oxygen atom to form the C-terminus of the beta chain, while the remainder of the serine residue undergoes an oxidative deamination to produce ammonia and the pyruvoyl prosthetic group on the alpha chain. During this reaction, the Ser that is part of the protease active site of the proenzyme becomes the pyruvoyl prosthetic group, which constitutes an essential element of the active site of the mature decarboxylase.

The protein localises to the cell membrane. The enzyme catalyses a 1,2-diacyl-sn-glycero-3-phospho-L-serine + H(+) = a 1,2-diacyl-sn-glycero-3-phosphoethanolamine + CO2. The protein operates within phospholipid metabolism; phosphatidylethanolamine biosynthesis; phosphatidylethanolamine from CDP-diacylglycerol: step 2/2. Its function is as follows. Catalyzes the formation of phosphatidylethanolamine (PtdEtn) from phosphatidylserine (PtdSer). This Clostridium botulinum (strain ATCC 19397 / Type A) protein is Phosphatidylserine decarboxylase proenzyme.